Reading from the N-terminus, the 109-residue chain is Protein phosphatase 1 regulatory subunit 1C (109 aa).

The tract at residues 25–109 (AEQIRKRRPT…TNEREEQRDH (85 aa)) is disordered. Residues 45 to 54 (NPPEIDDKRV) are compositionally biased toward basic and acidic residues. Positions 55-75 (PNTQGELQNASPKQRKQSVYT) are enriched in polar residues. The span at 100 to 109 (TNEREEQRDH) shows a compositional bias: basic and acidic residues.

Belongs to the protein phosphatase inhibitor 1 family.

It localises to the cytoplasm. Functionally, may increase cell susceptibility to TNF-induced apoptosis. The protein is Protein phosphatase 1 regulatory subunit 1C (PPP1R1C) of Pongo abelii (Sumatran orangutan).